The following is a 252-amino-acid chain: Phosphate import ATP-binding protein PstB 1 (252 aa).

Residues 6 to 247 (LQIRDLSVYY…PKRKETEDYI (242 aa)) form the ABC transporter domain. An ATP-binding site is contributed by 38–45 (GPSGSGKS).

This sequence belongs to the ABC transporter superfamily. Phosphate importer (TC 3.A.1.7) family. As to quaternary structure, the complex is composed of two ATP-binding proteins (PstB), two transmembrane proteins (PstC and PstA) and a solute-binding protein (PstS).

The protein localises to the cell membrane. The enzyme catalyses phosphate(out) + ATP + H2O = ADP + 2 phosphate(in) + H(+). Its function is as follows. Part of the ABC transporter complex PstSACB involved in phosphate import. Responsible for energy coupling to the transport system. This chain is Phosphate import ATP-binding protein PstB 1, found in Streptococcus pyogenes serotype M6 (strain ATCC BAA-946 / MGAS10394).